The chain runs to 369 residues: H-2 class I histocompatibility antigen, K-K alpha chain (369 aa).

A signal peptide spans 1–21 (MAPCMLLLLLAAALAPTQTRA). Positions 22 to 111 (GPHSLRYFHT…ALRYYNQSAG (90 aa)) are alpha-1. Over 22–305 (GPHSLRYFHT…EPPPSTVSNT (284 aa)) the chain is Extracellular. N-linked (GlcNAc...) asparagine glycosylation occurs at Asn107. An alpha-2 region spans residues 112 to 203 (GSHTFQRMYG…QLGNATLPRT (92 aa)). Cys122 and Cys185 form a disulfide bridge. N-linked (GlcNAc...) asparagine glycosylation is present at Asn197. Residues 204–295 (DSPKAHVTRH…GLPEPLTLRW (92 aa)) are alpha-3. The 89-residue stretch at 206–294 (PKAHVTRHSR…QGLPEPLTLR (89 aa)) folds into the Ig-like C1-type domain. An intrachain disulfide couples Cys224 to Cys280. Residues 296-305 (EPPPSTVSNT) form a connecting peptide region. Residues 306-328 (VIIAVLVVLGAAIVTGAVVAFVM) form a helical membrane-spanning segment. The Cytoplasmic portion of the chain corresponds to 329–369 (KMRRRNTGGKGGDYALAPGSQTSDLSLPDCKVMVHDPHSLA). Ser351 and Ser354 each carry phosphoserine.

This sequence belongs to the MHC class I family. In terms of assembly, heterodimer of an alpha chain and a beta chain (beta-2-microglobulin).

The protein localises to the membrane. Its function is as follows. Involved in the presentation of foreign antigens to the immune system. This Mus musculus (Mouse) protein is H-2 class I histocompatibility antigen, K-K alpha chain (H2-K1).